Reading from the N-terminus, the 786-residue chain is Endonuclease MutS2 (786 aa).

333 to 340 (GPNTGGKT) is an ATP binding site. The Smr domain maps to 711–786 (LDLRGERYDQ…GSGATIVNFK (76 aa)).

The protein belongs to the DNA mismatch repair MutS family. MutS2 subfamily. In terms of assembly, homodimer. Binds to stalled ribosomes, contacting rRNA.

Functionally, endonuclease that is involved in the suppression of homologous recombination and thus may have a key role in the control of bacterial genetic diversity. Acts as a ribosome collision sensor, splitting the ribosome into its 2 subunits. Detects stalled/collided 70S ribosomes which it binds and splits by an ATP-hydrolysis driven conformational change. Acts upstream of the ribosome quality control system (RQC), a ribosome-associated complex that mediates the extraction of incompletely synthesized nascent chains from stalled ribosomes and their subsequent degradation. Probably generates substrates for RQC. This Lacticaseibacillus paracasei (strain ATCC 334 / BCRC 17002 / CCUG 31169 / CIP 107868 / KCTC 3260 / NRRL B-441) (Lactobacillus paracasei) protein is Endonuclease MutS2.